The sequence spans 452 residues: Chloride/fluoride channel protein (452 aa).

10 helical membrane passes run 23-43, 57-77, 97-117, 160-180, 188-208, 222-242, 264-284, 315-337, 344-364, and 386-408; these read WLAL…LFLL, WVIW…HLIG, IVPL…HLFG, FASV…VLAI, LFPC…WGVV, LWSV…GLLF, PFAG…NHYI, VFTV…FYIG, LAPL…VAVF, and IAPL…GIYH.

It belongs to the chloride channel (TC 2.A.49) family.

Its subcellular location is the cell membrane. Its function is as follows. Transports chloride and fluoride with similar efficiency. This chain is Chloride/fluoride channel protein (eriC), found in Pseudomonas syringae pv. tomato (strain ATCC BAA-871 / DC3000).